The sequence spans 276 residues: Pantothenate synthetase (276 aa).

26 to 33 contributes to the ATP binding site; the sequence is MGFLHAGH. Catalysis depends on histidine 33, which acts as the Proton donor. Glutamine 57 contacts (R)-pantoate. Glutamine 57 contributes to the beta-alanine binding site. 143 to 146 is an ATP binding site; sequence GQKD. Glutamine 149 provides a ligand contact to (R)-pantoate. ATP contacts are provided by residues isoleucine 172 and 180 to 183; that span reads MSSR.

This sequence belongs to the pantothenate synthetase family. In terms of assembly, homodimer.

The protein resides in the cytoplasm. It catalyses the reaction (R)-pantoate + beta-alanine + ATP = (R)-pantothenate + AMP + diphosphate + H(+). Its pathway is cofactor biosynthesis; (R)-pantothenate biosynthesis; (R)-pantothenate from (R)-pantoate and beta-alanine: step 1/1. Its function is as follows. Catalyzes the condensation of pantoate with beta-alanine in an ATP-dependent reaction via a pantoyl-adenylate intermediate. In Herpetosiphon aurantiacus (strain ATCC 23779 / DSM 785 / 114-95), this protein is Pantothenate synthetase.